Here is a 187-residue protein sequence, read N- to C-terminus: Serine/arginine-rich splicing factor RSZ21 (187 aa).

The 72-residue stretch at 2–73 (TRVYVGNLDP…WRVELSHKDK (72 aa)) folds into the RRM domain. Disordered regions lie at residues 68-89 (LSHKDKGGRGGGGGRRGGIEDS) and 105-187 (RRGR…ANGV). The CCHC-type zinc finger occupies 89–106 (SKCYECGELGHFARECRR). Residues 107 to 122 (GRGSVRRRSPSPRRRR) are compositionally biased toward basic residues. Ser123, Ser132, Ser134, Ser140, Ser146, and Ser159 each carry phosphoserine. The segment covering 136–155 (RGRRSPPRRRSVTPPRRGRS) has biased composition (basic residues). A compositionally biased stretch (basic and acidic residues) spans 165–177 (SRRDSPRRRDSPY). Residues 178–187 (GRRSPYANGV) are compositionally biased toward low complexity. Ser181 bears the Phosphoserine mark.

It belongs to the splicing factor SR family. RSZ subfamily. Component of the spliceosome. Interacts with SNRNP35, AFC2, CYP59, RS2Z33 and RNU1. Interacts with MOS14. In terms of processing, extensively phosphorylated on serine residues in the RS domain. Phosphorylated by AFC2. In terms of tissue distribution, expressed in roots, leaves, flowers and siliques.

The protein resides in the nucleus speckle. Probably involved in intron recognition and spliceosome assembly. This is Serine/arginine-rich splicing factor RSZ21 (RSZ21) from Arabidopsis thaliana (Mouse-ear cress).